A 666-amino-acid polypeptide reads, in one-letter code: Non-receptor tyrosine-protein kinase TNK1 (666 aa).

Phosphoserine is present on S96. Residues 116 to 383 enclose the Protein kinase domain; that stretch reads VRRGELLGSG…LEGLLQEAWL (268 aa). ATP is bound by residues 122-130 and K148; that span reads LGSGCFGVV. D245 acts as the Proton acceptor in catalysis. Residue S255 is modified to Phosphoserine. Positions 381-441 constitute an SH3 domain; it reads AWLSEGRCVR…PASAVTLADL (61 aa). Residues 442–589 form a disordered region; it reads GGSPVTHPAH…VPSGGPLSDP (148 aa). The span at 457–473 shows a compositional bias: basic and acidic residues; sequence HGEKCRGGTDGDREKAT. Position 498 is a phosphoserine (S498). T510 is modified (phosphothreonine). S515 carries the post-translational modification Phosphoserine. Residues 531–544 are compositionally biased toward pro residues; that stretch reads DLPPRPPDLPPRPP. S582 carries the phosphoserine modification.

The protein belongs to the protein kinase superfamily. Tyr protein kinase family. In terms of assembly, interacts with the SH3 domain of PLCG1 via its Pro-rich domain. Autophosphorylated on tyrosine residues. Expressed in whole embryo and all adult tissues examined including liver, kidney, heart, brain, skeletal muscle and intestine. Also detected in various myeloid- and lymphoid-derived cell lines.

The protein resides in the membrane. It is found in the cytoplasm. The enzyme catalyses L-tyrosyl-[protein] + ATP = O-phospho-L-tyrosyl-[protein] + ADP + H(+). May function in signaling pathways utilized broadly during fetal development and more selectively in adult tissues and in cells of the lymphohematopoietic system. Could specifically be involved in phospholipid signal transduction. Involved in negative regulation of cell growth. Has tumor suppressor properties. Plays a negative regulatory role in the Ras-MAPK pathway. In Mus musculus (Mouse), this protein is Non-receptor tyrosine-protein kinase TNK1.